A 221-amino-acid chain; its full sequence is Ethylene-inducing xylanase 4 (221 aa).

Positions 1–19 (MVSFSTLLTACTAITGALG) are cleaved as a signal peptide. The GH11 domain occupies 28 to 218 (NVTPNAQGTH…SAGRASVVVE (191 aa)). N-linked (GlcNAc...) asparagine glycosylation occurs at N96. The Nucleophile role is filled by E114. E205 functions as the Proton donor in the catalytic mechanism.

It belongs to the glycosyl hydrolase 11 (cellulase G) family.

The catalysed reaction is Endohydrolysis of (1-&gt;4)-beta-D-xylosidic linkages in xylans.. Its pathway is glycan degradation; xylan degradation. Its function is as follows. Endo-1,4-beta-xylanase involved in the hydrolysis of xylan, a major structural heterogeneous polysaccharide found in plant biomass representing the second most abundant polysaccharide in the biosphere, after cellulose. May act as an elicitor of plant defense responses in certain plants but does not exhibit any cell death when transiently expressed in N.benthamiana. In Verticillium dahliae (strain VdLs.17 / ATCC MYA-4575 / FGSC 10137) (Verticillium wilt), this protein is Ethylene-inducing xylanase 4.